Reading from the N-terminus, the 458-residue chain is Preferentially expressed antigen in melanoma-like protein 1 (458 aa).

One copy of the LRR 1; degenerate repeat lies at 99 to 126 (RCKLQVLDLRVMPLKLWNRLPVFGTAGC). An LRR 2; degenerate repeat occupies 176–200 (SLCCCKLQIWAMSMYYHRKLLEILD). The stretch at 201–227 (LDSVQELRMYCISNPVCLLNFAPYLGR) is one LRR 3; degenerate repeat. The stretch at 228–263 (MRNLRCLILSHLWQTFSMTPVEKQQVITQFTSQFLK) is one LRR 4; degenerate repeat. LRR repeat units lie at residues 264 to 289 (LKCL…FWWL), 290 to 321 (KTPL…SQLK), 322 to 340 (HLNL…PLRV), 346 to 373 (ASTL…ALRC), and 374 to 398 (CTQL…LAYN).

It belongs to the PRAME family. Specifically expressed in testis (at protein level).

It localises to the cytoplasm. The protein resides in the cytoplasmic vesicle. The protein localises to the secretory vesicle. Its subcellular location is the acrosome. It is found in the cell projection. It localises to the cilium. The protein resides in the flagellum. Functionally, may play a role in acrosome development and also in sperm maturation and motility. In Mus musculus (Mouse), this protein is Preferentially expressed antigen in melanoma-like protein 1.